A 952-amino-acid chain; its full sequence is Anion exchange protein 4 (952 aa).

The disordered stretch occupies residues 1–41 (MKLPGQGDFESSDAHENAHSEEPDSGLGPGPGLNGPSGIDI). Basic and acidic residues predominate over residues 12 to 22 (SDAHENAHSEE). A run of 4 helical transmembrane segments spans residues 385–405 (AVFYIYLATVTNAITFGGLLG), 413–433 (GVLESFLGTAVAGAAFCLMAG), 470–490 (VGIWVTAFCLALVATEASLLV), and 501–521 (FCALISLIFIYDAMGKMLNLI). N-linked (GlcNAc...) asparagine glycosylation is found at Asn546 and Asn569. A run of 7 helical transmembrane segments spans residues 593–613 (VPDIAFFSLLLFFTSFLCAIA), 634–654 (FSSVLAILLGCGLDTFLGLAT), 681–701 (PWWLSVAAALPALLLSILIFM), 727–747 (LFCVAVLMLFTSALGLPWYVS), 784–804 (GLVVFVLTGVSIFLAPVLKFI), 807–827 (PVLYGIFLYMGVAALSSIQFV), and 870–890 (VVKSTPAAIVFPLMLLGLVAI). The tract at residues 915–938 (ETIPENRSEPEHLFSGNDSEDSEL) is disordered. N-linked (GlcNAc...) asparagine glycosylation is found at Asn920, Asn931, and Asn948.

This sequence belongs to the anion exchanger (TC 2.A.31) family. Expressed in submandibular gland (SMG) duct and cortical collecting duct (CCD) of kidney. Lower expressed in duodenal villi.

The protein localises to the basolateral cell membrane. The enzyme catalyses 2 hydrogencarbonate(out) + chloride(in) + Na(+)(out) = 2 hydrogencarbonate(in) + chloride(out) + Na(+)(in). It catalyses the reaction K(+)(in) + 2 hydrogencarbonate(in) + chloride(out) = K(+)(out) + 2 hydrogencarbonate(out) + chloride(in). The catalysed reaction is Li(+)(in) + 2 hydrogencarbonate(in) + chloride(out) = Li(+)(out) + 2 hydrogencarbonate(out) + chloride(in). It carries out the reaction Rb(+)(in) + 2 hydrogencarbonate(in) + chloride(out) = Rb(+)(out) + 2 hydrogencarbonate(out) + chloride(in). The enzyme catalyses Cs(+)(in) + 2 hydrogencarbonate(in) + chloride(out) = Cs(+)(out) + 2 hydrogencarbonate(out) + chloride(in). Its activity is regulated as follows. Cl(-)/HCO3(-) exchanger activity is substantially increased in response to 5 uM isoproterenol. Cl(-)/HCO3(-) exchanger activity is increased by both forskolin and coexpression with the catalytic subunit alpha of PKA. In terms of biological role, electroneutral Cl(-)/HCO3(-) antiporter that favors chloride ion entry and efflux of hydrogencarbonate and sodium ion across the basolateral membrane and may participate in salivary secretion. Also mediates Cl(-)/HCO3(-) exchange activity in the presence of K(+) as well as Cs(+), Li(+), and Rb(+). Does not contribute to Cl(-)/HCO3(-) exchanger in the apical membrane of the upper villous epithelium. The polypeptide is Anion exchange protein 4 (Mus musculus (Mouse)).